A 137-amino-acid chain; its full sequence is Nucleoside diphosphate kinase (137 aa).

6 residues coordinate ATP: K10, F59, R87, T93, R104, and N114. Catalysis depends on H117, which acts as the Pros-phosphohistidine intermediate.

Belongs to the NDK family. Homotetramer. Requires Mg(2+) as cofactor.

Its subcellular location is the cytoplasm. The catalysed reaction is a 2'-deoxyribonucleoside 5'-diphosphate + ATP = a 2'-deoxyribonucleoside 5'-triphosphate + ADP. The enzyme catalyses a ribonucleoside 5'-diphosphate + ATP = a ribonucleoside 5'-triphosphate + ADP. Functionally, major role in the synthesis of nucleoside triphosphates other than ATP. The ATP gamma phosphate is transferred to the NDP beta phosphate via a ping-pong mechanism, using a phosphorylated active-site intermediate. This is Nucleoside diphosphate kinase from Streptomyces avermitilis (strain ATCC 31267 / DSM 46492 / JCM 5070 / NBRC 14893 / NCIMB 12804 / NRRL 8165 / MA-4680).